We begin with the raw amino-acid sequence, 280 residues long: Pantothenate synthetase (280 aa).

30–37 (MGALHEGH) lines the ATP pocket. The active-site Proton donor is histidine 37. Glutamine 61 is a (R)-pantoate binding site. Residue glutamine 61 coordinates beta-alanine. An ATP-binding site is contributed by 147–150 (GQKD). (R)-pantoate is bound at residue glutamine 153. Residues valine 176 and 184–187 (MSSR) contribute to the ATP site.

This sequence belongs to the pantothenate synthetase family. In terms of assembly, homodimer.

The protein resides in the cytoplasm. The catalysed reaction is (R)-pantoate + beta-alanine + ATP = (R)-pantothenate + AMP + diphosphate + H(+). It functions in the pathway cofactor biosynthesis; (R)-pantothenate biosynthesis; (R)-pantothenate from (R)-pantoate and beta-alanine: step 1/1. Catalyzes the condensation of pantoate with beta-alanine in an ATP-dependent reaction via a pantoyl-adenylate intermediate. The chain is Pantothenate synthetase from Thermodesulfovibrio yellowstonii (strain ATCC 51303 / DSM 11347 / YP87).